A 340-amino-acid polypeptide reads, in one-letter code: Fructose-bisphosphate aldolase (340 aa).

Serine 53 contributes to the D-glyceraldehyde 3-phosphate binding site. The Proton donor role is filled by aspartate 95. Histidine 96, aspartate 131, glutamate 161, and histidine 212 together coordinate Zn(2+). Glycine 213 is a binding site for dihydroxyacetone phosphate. Residue histidine 249 coordinates Zn(2+). Dihydroxyacetone phosphate-binding positions include 250–252 and 271–274; these read GGS and NLDT.

The protein belongs to the class II fructose-bisphosphate aldolase family. It depends on Zn(2+) as a cofactor.

The enzyme catalyses beta-D-fructose 1,6-bisphosphate = D-glyceraldehyde 3-phosphate + dihydroxyacetone phosphate. It functions in the pathway carbohydrate degradation; glycolysis; D-glyceraldehyde 3-phosphate and glycerone phosphate from D-glucose: step 4/4. Catalyzes the aldol condensation of dihydroxyacetone phosphate (DHAP or glycerone-phosphate) with glyceraldehyde 3-phosphate (G3P) to form fructose 1,6-bisphosphate (FBP) in gluconeogenesis and the reverse reaction in glycolysis. The sequence is that of Fructose-bisphosphate aldolase (fba) from Streptomyces galbus.